We begin with the raw amino-acid sequence, 453 residues long: UDP-N-acetylmuramoylalanine--D-glutamate ligase (453 aa).

115-121 (GTNGKTT) lines the ATP pocket.

It belongs to the MurCDEF family.

It is found in the cytoplasm. The enzyme catalyses UDP-N-acetyl-alpha-D-muramoyl-L-alanine + D-glutamate + ATP = UDP-N-acetyl-alpha-D-muramoyl-L-alanyl-D-glutamate + ADP + phosphate + H(+). It functions in the pathway cell wall biogenesis; peptidoglycan biosynthesis. Its function is as follows. Cell wall formation. Catalyzes the addition of glutamate to the nucleotide precursor UDP-N-acetylmuramoyl-L-alanine (UMA). The protein is UDP-N-acetylmuramoylalanine--D-glutamate ligase of Geotalea uraniireducens (strain Rf4) (Geobacter uraniireducens).